The chain runs to 222 residues: Cytochrome b6-f complex iron-sulfur subunit, chloroplastic (222 aa).

The N-terminal 49 residues, Met-1–Ser-49, are a transit peptide targeting the chloroplast. A helical membrane pass occupies residues Leu-66–Val-86. The Rieske domain occupies Val-109–Phe-205. [2Fe-2S] cluster is bound by residues Cys-151, His-153, Cys-169, and His-172. Cys-156 and Cys-171 are disulfide-bonded.

This sequence belongs to the Rieske iron-sulfur protein family. In terms of assembly, the 4 large subunits of the cytochrome b6-f complex are cytochrome b6, subunit IV (17 kDa polypeptide, petD), cytochrome f and the Rieske protein, while the 4 small subunits are petG, petL, petM and petN. The complex functions as a dimer. It depends on [2Fe-2S] cluster as a cofactor.

The protein resides in the plastid. It localises to the chloroplast thylakoid membrane. It catalyses the reaction 2 oxidized [plastocyanin] + a plastoquinol + 2 H(+)(in) = 2 reduced [plastocyanin] + a plastoquinone + 4 H(+)(out). Component of the cytochrome b6-f complex, which mediates electron transfer between photosystem II (PSII) and photosystem I (PSI), cyclic electron flow around PSI, and state transitions. This Triticum aestivum (Wheat) protein is Cytochrome b6-f complex iron-sulfur subunit, chloroplastic (petC).